Consider the following 191-residue polypeptide: uncharacterized protein (191 aa).

This is an uncharacterized protein from Treponema pallidum (strain Nichols).